Consider the following 390-residue polypeptide: MNLHEYQAKSLFQQYGIPVPKGVMINDLADLDAALGQIDSKGWVVKAQIHAGARGKAGGVKLVETAEEAEQAASELLGSSLATIQTAGKALPINALLIEQTLDIYQEFYLSLMVDRVTKTHTFVISAAGGMDIELVAEASPEKILSVHVDPTVGLMPYQCREIAFALGLTGTAFKQMASVMQGFYQLALDKDVSLLEINPLVLTAENELVALDAKVNIDSNALYRQPGLVEMRDISQEDVREAKAADHQLNYIALDGNIGCMVNGAGLAMATMDLIKLNGGEPANFLDVGGGATPERVAEAFKLILSSSDVQSILVNIFGGIVRCDLIADGIIQAVQEVGLTIPVVVRLEGTNVTLGKEKLANSGLSIITADGLADAAEKVVAVALEANQ.

Positions 9-244 (KSLFQQYGIP…ISQEDVREAK (236 aa)) constitute an ATP-grasp domain. Positions 46, 99, 102, and 107 each coordinate ATP. Mg(2+)-binding residues include Asn199 and Asp213. Substrate is bound by residues Asn264 and 321-323 (GIV).

It belongs to the succinate/malate CoA ligase beta subunit family. In terms of assembly, heterotetramer of two alpha and two beta subunits. Mg(2+) serves as cofactor.

It carries out the reaction succinate + ATP + CoA = succinyl-CoA + ADP + phosphate. The enzyme catalyses GTP + succinate + CoA = succinyl-CoA + GDP + phosphate. It participates in carbohydrate metabolism; tricarboxylic acid cycle; succinate from succinyl-CoA (ligase route): step 1/1. Its function is as follows. Succinyl-CoA synthetase functions in the citric acid cycle (TCA), coupling the hydrolysis of succinyl-CoA to the synthesis of either ATP or GTP and thus represents the only step of substrate-level phosphorylation in the TCA. The beta subunit provides nucleotide specificity of the enzyme and binds the substrate succinate, while the binding sites for coenzyme A and phosphate are found in the alpha subunit. The chain is Succinate--CoA ligase [ADP-forming] subunit beta from Hydrogenovibrio crunogenus (strain DSM 25203 / XCL-2) (Thiomicrospira crunogena).